The sequence spans 185 residues: Translation initiation factor IF-3 (185 aa).

This sequence belongs to the IF-3 family. Monomer.

It localises to the cytoplasm. IF-3 binds to the 30S ribosomal subunit and shifts the equilibrium between 70S ribosomes and their 50S and 30S subunits in favor of the free subunits, thus enhancing the availability of 30S subunits on which protein synthesis initiation begins. The chain is Translation initiation factor IF-3 from Streptococcus pneumoniae (strain Hungary19A-6).